A 130-amino-acid polypeptide reads, in one-letter code: Small ribosomal subunit protein uS9 (130 aa).

The protein belongs to the universal ribosomal protein uS9 family.

This chain is Small ribosomal subunit protein uS9, found in Streptococcus gordonii (strain Challis / ATCC 35105 / BCRC 15272 / CH1 / DL1 / V288).